Reading from the N-terminus, the 118-residue chain is Small ribosomal subunit protein uS13 (118 aa).

Residues 94 to 118 form a disordered region; sequence SLPLRGQRTKTNARTRKGPRKPIRK.

This sequence belongs to the universal ribosomal protein uS13 family. In terms of assembly, part of the 30S ribosomal subunit. Forms a loose heterodimer with protein S19. Forms two bridges to the 50S subunit in the 70S ribosome.

Its function is as follows. Located at the top of the head of the 30S subunit, it contacts several helices of the 16S rRNA. In the 70S ribosome it contacts the 23S rRNA (bridge B1a) and protein L5 of the 50S subunit (bridge B1b), connecting the 2 subunits; these bridges are implicated in subunit movement. Contacts the tRNAs in the A and P-sites. This is Small ribosomal subunit protein uS13 from Shewanella woodyi (strain ATCC 51908 / MS32).